We begin with the raw amino-acid sequence, 486 residues long: Cardiolipin synthase A (486 aa).

2 helical membrane-spanning segments follow: residues 3-23 (IFYN…IANI) and 38-58 (MSWL…WFFF). 2 consecutive PLD phosphodiesterase domains span residues 219–246 (VDVR…VDPY) and 399–426 (QKGL…DMRS). Residues His-224, Lys-226, Asp-231, His-404, Lys-406, and Asp-411 contribute to the active site.

Belongs to the phospholipase D family. Cardiolipin synthase subfamily. ClsA sub-subfamily.

The protein resides in the cell inner membrane. The enzyme catalyses 2 a 1,2-diacyl-sn-glycero-3-phospho-(1'-sn-glycerol) = a cardiolipin + glycerol. Functionally, catalyzes the reversible phosphatidyl group transfer from one phosphatidylglycerol molecule to another to form cardiolipin (CL) (diphosphatidylglycerol) and glycerol. The chain is Cardiolipin synthase A from Buchnera aphidicola subsp. Acyrthosiphon pisum (strain 5A).